The sequence spans 30 residues: Small toxic protein BsrE (30 aa).

Residues Phe4–Ile24 traverse the membrane as a helical segment.

It localises to the cell membrane. Functionally, toxic component of a type I toxin-antitoxin (TA) system; overexpression in the absence of cognate antisense antitoxin SR5 RNA leads to cell lysis. Base pairing occurs between the 3' UTRs of bsrE mRNA and SR5 RNA which leads to bsrE mRNA degradation initiated by RNase III (rnc) and RNase J1 (rnjA). Genetic evidence suggests an unidentified RNA-binding protein may exist that promotes TA RNA interaction. This Bacillus subtilis (strain 168) protein is Small toxic protein BsrE.